The sequence spans 135 residues: RuBisCO chaperone RbcX (135 aa).

A disordered region spans residues 103-135; sequence QHLERMTQVSLSHPSPESEQQQFSDPDWDNLAS. The span at 109–126 shows a compositional bias: polar residues; it reads TQVSLSHPSPESEQQQFS.

The protein belongs to the RbcX family. As to quaternary structure, homodimer. Interacts with the exposed C-terminal peptide of RbcL ('Glu-459-Asp-468'); binds 1 RbcL peptide per homodimer. Contacts a second RbcL monomer via its peripheral polar surface. A slightly longer RbcL peptide binds to RbcX2 with a higher affinity.

The protein resides in the carboxysome. Its subcellular location is the cytoplasm. Functionally, an RbcL-specific chaperone. The central cleft of the RbcX homodimer (RbcX2) binds the C-terminus of an RbcL monomer, stabilizing the C-terminus and probably preventing its reassociation with chaperonin GroEL-ES. At the same time the peripheral region of RbcX2 binds a second RbcL monomer, bridging the RbcL homodimers in the correct orientation. The RbcX2(2)-bound RbcL dimers then assemble into the RbcL8 core (RbcL8-(RbcX2)8). RbcS binding triggers the release of RbcX2. Required for optimal reconstitution of RuBisCO upon expression of rbcL-rbcS subunits in E.coli. This is RuBisCO chaperone RbcX from Anabaena sp. (strain CA / ATCC 33047).